The chain runs to 918 residues: Glutamate receptor ionotropic, kainate 1 (918 aa).

The first 30 residues, 1–30, serve as a signal peptide directing secretion; sequence MEHGTLLAQPGLWTRDTSWALLYFLCYILP. Topologically, residues 31–576 are extracellular; sequence QTAPQVLRIG…VFSFLNPLSP (546 aa). 7 N-linked (GlcNAc...) asparagine glycosylation sites follow: Asn68, Asn74, Asn276, Asn379, Asn428, Asn439, and Asn446. Residues Pro531, Thr533, and Arg538 each contribute to the L-glutamate site. Asn561 carries an N-linked (GlcNAc...) asparagine glycan. Residues 577-597 form a helical membrane-spanning segment; it reads DIWMYVLLACLGVSCVLFVIA. The Cytoplasmic portion of the chain corresponds to 598–653; the sequence is RFTPYEWYNPHPCNPDSDVVENNFTLLNSFWFGVGALMQQGSELMPKALSTRIVGG. The chain crosses the membrane as a helical span at residues 654–674; sequence IWWFFTLIIISSYTANLAAFL. Residues 675–834 lie on the Extracellular side of the membrane; sequence TVERMESPID…KEASALGVEN (160 aa). L-glutamate contacts are provided by Ser704 and Thr705. At Ser725 the chain carries Phosphoserine; by PKC. L-glutamate is bound at residue Glu753. Position 761 is a phosphothreonine; by PKC (Thr761). A disulfide bridge connects residues Cys765 and Cys819. A glycan (N-linked (GlcNAc...) asparagine) is linked at Asn766. Residues 835-855 form a helical membrane-spanning segment; the sequence is IGGIFIVLAAGLVLSVFVAIG. The Cytoplasmic portion of the chain corresponds to 856–918; that stretch reads EFIYKSRKNN…IRKQSSVHTV (63 aa).

Belongs to the glutamate-gated ion channel (TC 1.A.10.1) family. GRIK1 subfamily. Homotetramer or heterotetramer of pore-forming glutamate receptor subunits. Tetramers may be formed by the dimerization of dimers. Can form functional heteromeric receptors with GRIK5. Can form functional heteromeric receptors with GRIK4. Interacts with KLHL17.

The protein resides in the cell membrane. The protein localises to the postsynaptic cell membrane. The enzyme catalyses Ca(2+)(in) = Ca(2+)(out). Functionally, ionotropic glutamate receptor that functions as a cation-permeable ligand-gated ion channel, gated by L-glutamate and the glutamatergic agonist kainic acid. L-glutamate acts as an excitatory neurotransmitter at many synapses in the central nervous system. Binding of the excitatory neurotransmitter L-glutamate induces a conformation change, leading to the opening of the cation channel, and thereby converts the chemical signal to an electrical impulse. The receptor then desensitizes rapidly and enters a transient inactive state, characterized by the presence of bound agonist. Ionotropic glutamate receptor that functions as a cation-permeable ligand-gated ion channel, gated by L-glutamate and the glutamatergic agonist kainic acid. The polypeptide is Glutamate receptor ionotropic, kainate 1 (GRIK1) (Homo sapiens (Human)).